A 511-amino-acid chain; its full sequence is Histidine ammonia-lyase (511 aa).

Residues 142-144 (ASG) constitute a cross-link (5-imidazolinone (Ala-Gly)). Residue Ser-143 is modified to 2,3-didehydroalanine (Ser).

The protein belongs to the PAL/histidase family. Contains an active site 4-methylidene-imidazol-5-one (MIO), which is formed autocatalytically by cyclization and dehydration of residues Ala-Ser-Gly.

The protein resides in the cytoplasm. It carries out the reaction L-histidine = trans-urocanate + NH4(+). It participates in amino-acid degradation; L-histidine degradation into L-glutamate; N-formimidoyl-L-glutamate from L-histidine: step 1/3. This is Histidine ammonia-lyase from Brucella canis (strain ATCC 23365 / NCTC 10854 / RM-666).